A 352-amino-acid polypeptide reads, in one-letter code: Minor capsid protein VP2 (352 aa).

The N-myristoyl glycine; by host moiety is linked to residue glycine 2. A D1 region spans residues serine 273 to proline 308. The chain crosses the membrane as a helical span at residues isoleucine 290 to leucine 310. The interval alanine 312–serine 352 is disordered. The DNA-binding stretch occupies residues tyrosine 313–serine 352. The Nuclear localization signal signature appears at alanine 316–methionine 324. Over residues serine 342–serine 352 the composition is skewed to basic residues.

It belongs to the polyomaviruses capsid protein VP2 family. Forms homooligomers, and heterooligomers with VP3 in the endoplasmic reticulum membrane. Interacts (via D1 domain) with VP1. In terms of assembly, interacts (via D1 domain) with VP1.

The protein localises to the virion. It is found in the host nucleus. The protein resides in the host endoplasmic reticulum. It localises to the host endoplasmic reticulum membrane. Functionally, structural protein that resides within the core of the capsid surrounded by 72 VP1 pentamers. Participates in host cell receptor binding together with VP1. Following virus endocytosis and trafficking to the endoplasmic reticulum, VP2 and VP3 form oligomers and integrate into the endoplasmic reticulum membrane. Heterooligomer VP2-VP3 may create a viroporin for transporting the viral genome across the endoplasmic reticulum membrane to the cytoplasm. Nuclear entry of the viral DNA involves the selective exposure and importin recognition of VP2 or VP3 nuclear localization signal (shared C-terminus). Plays a role in virion assembly within the nucleus in particular through a DNA-binding domain located in the C-terminal region. An N-terminal myristoylation suggests a scaffold function for virion assembly. In terms of biological role, structural protein that resides within the core of the capsid surrounded by 72 VP1 pentamers. Following virus endocytosis and trafficking to the endoplasmic reticulum, VP2 and VP3 form oligomers and integrate into the endoplasmic reticulum membrane. Heterooligomer VP2-VP3 may create a viroporin for transporting the viral genome across the endoplasmic reticulum membrane to the cytoplasm. Nuclear entry of the viral DNA involves the selective exposure and importin recognition of VP2 or VP3 nuclear localization signal (shared C-terminus). Plays a role in virion assembly within the nucleus. May participate in host cell lysis when associated with VP4. Viroporin inducing perforation of cellular membranes to trigger virus progeny release. Forms pores of 3 nm inner diameter. VP4 is expressed about 24 hours after the late structural proteins and is not incorporated into the mature virion. The protein is Minor capsid protein VP2 of Simian virus 12 (strain wt100) (SV-12).